The sequence spans 504 residues: tRNA (uracil-5-)-methyltransferase homolog B (504 aa).

A mitochondrion-targeting transit peptide spans Met-1 to Phe-16. S-adenosyl-L-methionine contacts are provided by Gln-323, Glu-373, and Asn-423. Cys-451 (nucleophile) is an active-site residue. The active-site Proton acceptor is the Glu-497.

This sequence belongs to the class I-like SAM-binding methyltransferase superfamily. RNA M5U methyltransferase family.

The protein localises to the mitochondrion. It localises to the mitochondrion matrix. The catalysed reaction is uridine(54) in tRNA + S-adenosyl-L-methionine = 5-methyluridine(54) in tRNA + S-adenosyl-L-homocysteine + H(+). It catalyses the reaction a uridine in 12S rRNA + S-adenosyl-L-methionine = a 5-methyluridine in 12S rRNA + S-adenosyl-L-homocysteine + H(+). Mitochondrial S-adenosyl-L-methionine-dependent methyltransferase that catalyzes the formation of 5-methyl-uridine in tRNAs and 12S rRNA. Catalyzes the methylation of uridine at position 54 (m5U54) in all tRNAs. Specifically methylates the uridine in position 429 of 12S rRNA (m5U429). Does not affect RNA stability or mitochondrial translation. The polypeptide is tRNA (uracil-5-)-methyltransferase homolog B (Homo sapiens (Human)).